The following is a 140-amino-acid chain: MAPITFHLDVVSAEKRIFSGRVETFQVTGSEGELGIFHGHTPLLSAIKPGMVRIVKQHGHEEFIYVSGGMVEVQPGTATVLADTAIRGEDLDAAKAEEAKRRAEEKIQNQHGDMDFAQAASELAKAIAQLRVIELTKKRR.

The protein belongs to the ATPase epsilon chain family. F-type ATPases have 2 components, CF(1) - the catalytic core - and CF(0) - the membrane proton channel. CF(1) has five subunits: alpha(3), beta(3), gamma(1), delta(1), epsilon(1). CF(0) has three main subunits: a, b and c.

It is found in the cell inner membrane. Produces ATP from ADP in the presence of a proton gradient across the membrane. This chain is ATP synthase epsilon chain, found in Vibrio parahaemolyticus serotype O3:K6 (strain RIMD 2210633).